The following is a 156-amino-acid chain: Ribosomal RNA large subunit methyltransferase H (156 aa).

S-adenosyl-L-methionine-binding positions include leucine 74, glycine 105, and 124 to 129; that span reads LSKLTL.

This sequence belongs to the RNA methyltransferase RlmH family. Homodimer.

Its subcellular location is the cytoplasm. It catalyses the reaction pseudouridine(1915) in 23S rRNA + S-adenosyl-L-methionine = N(3)-methylpseudouridine(1915) in 23S rRNA + S-adenosyl-L-homocysteine + H(+). In terms of biological role, specifically methylates the pseudouridine at position 1915 (m3Psi1915) in 23S rRNA. This Legionella pneumophila (strain Paris) protein is Ribosomal RNA large subunit methyltransferase H.